A 102-amino-acid chain; its full sequence is Small ribosomal subunit protein uS10 (102 aa).

It belongs to the universal ribosomal protein uS10 family. In terms of assembly, part of the 30S ribosomal subunit.

In terms of biological role, involved in the binding of tRNA to the ribosomes. The polypeptide is Small ribosomal subunit protein uS10 (Allorhizobium ampelinum (strain ATCC BAA-846 / DSM 112012 / S4) (Agrobacterium vitis (strain S4))).